The following is a 205-amino-acid chain: MKVLVVYYSMYGHIHRMAEAIVEGAKEVVGAEVVLRRVPETLSHDVLEKMGAVEAQRSMSHIPICTVDELAEADAVIFGSPTRFGNMCGQMRQFLDATGGLWVKGSLIGKVGSVFASSNTQHGGQESTILSFHTTLLHHGMVIVGLPYAFQGQMRNDEITGGSPYGASTVAGTQGERQPTENELAAARYQGKHVASIAYKLVMAR.

Residues 3 to 194 form the Flavodoxin-like domain; it reads VLVVYYSMYG…AAARYQGKHV (192 aa). Residues 9–14 and 82–84 each bind FMN; these read SMYGHI and TRF. Tyr11 serves as a coordination point for NAD(+). Trp102 is a binding site for substrate. His138 is an FMN binding site.

The protein belongs to the WrbA family. The cofactor is FMN.

It catalyses the reaction a quinone + NADH + H(+) = a quinol + NAD(+). The enzyme catalyses a quinone + NADPH + H(+) = a quinol + NADP(+). This chain is NAD(P)H dehydrogenase (quinone), found in Geotalea daltonii (strain DSM 22248 / JCM 15807 / FRC-32) (Geobacter daltonii).